Reading from the N-terminus, the 251-residue chain is MKVIFNADDFGLTQGVNNGIIKAHQQGVVLSTTMMMGMDAEQHAVELANQNPNLKIGVHLRFTAGNPLTGHPNLTGGGEQFVRFNELWKKRDFQEEAVYQEAVAQVERFLSLGLPLSHIDSHHHAHTHPQLLPVIRRVAEQYRVPLRGSGLCHIDCDTTYHFTDEFYDQGVSLDGVMAHLKSLKSQYDVVEVMCHPADVDQHLLSISGYALLRELELQVLTSPILKQELAEHGMSITDYSTLISTRKFASV.

Residues H59 and H122 each coordinate Mg(2+).

This sequence belongs to the YdjC deacetylase family. In terms of assembly, homodimer. Requires Mg(2+) as cofactor.

Functionally, probably catalyzes the deacetylation of acetylated carbohydrates an important step in the degradation of oligosaccharides. This chain is Carbohydrate deacetylase, found in Vibrio campbellii (strain ATCC BAA-1116).